A 274-amino-acid chain; its full sequence is Dehydration-responsive element-binding protein 2A (274 aa).

2 stretches are compositionally biased toward basic and acidic residues: residues 1 to 10 (MERGEGRRGD) and 35 to 50 (KWWK…ENSS). A disordered region spans residues 1 to 75 (MERGEGRRGD…KGGPENSNCA (75 aa)). The segment at residues 75 to 132 (AYRGVRQRTWGKWVAEIREPNRGRRLWLGSFPTALEAAHAYDEAARAMYGPTARVNFA) is a DNA-binding region (AP2/ERF).

It belongs to the AP2/ERF transcription factor family. ERF subfamily.

It localises to the nucleus. Functionally, transcriptional activator that binds specifically to the DNA sequence 5'-[AG]CCGAC-3' of the cis-acting dehydration-responsive element (DRE). Binding to the C-repeat/DRE element mediates high salinity- and dehydration-inducible transcription. The chain is Dehydration-responsive element-binding protein 2A (DREB2A) from Oryza sativa subsp. japonica (Rice).